The chain runs to 560 residues: Serine palmitoyltransferase 2 (560 aa).

Residues 65-85 (PMLVAVLTYVGYGVLTLFGYL) form a helical membrane-spanning segment. Lys377 is modified (N6-(pyridoxal phosphate)lysine).

It belongs to the class-II pyridoxal-phosphate-dependent aminotransferase family. As to quaternary structure, component of the serine palmitoyltransferase (SPT) complex, which is composed of SPTLC1, SPTLC2 or SPTLC3 and SPTSSA or SPTSSB. The heterodimer consisting of SPTLC1 and SPTLC2/SPTLC3 forms the catalytic core of the enzyme, while SPTSSA or SPTSSB subunits determine substrate specificity. SPT also interacts with ORMDL proteins, especially ORMDL3, which negatively regulate SPT activity in the presence of ceramides. Forms dimers of heterodimers with SPTLC1. The cofactor is pyridoxal 5'-phosphate.

Its subcellular location is the endoplasmic reticulum membrane. The enzyme catalyses L-serine + hexadecanoyl-CoA + H(+) = 3-oxosphinganine + CO2 + CoA. It catalyses the reaction octadecanoyl-CoA + L-serine + H(+) = 3-oxoeicosasphinganine + CO2 + CoA. Its pathway is lipid metabolism; sphingolipid metabolism. With respect to regulation, SPT complex catalytic activity is negatively regulated by ORMDL proteins, including ORMDL3, in the presence of ceramides. This mechanism allows to maintain ceramide levels at sufficient concentrations for the production of complex sphingolipids, but which prevents the accumulation of ceramides to levels that trigger apoptosis. In terms of biological role, component of the serine palmitoyltransferase multisubunit enzyme (SPT) that catalyzes the initial and rate-limiting step in sphingolipid biosynthesis by condensing L-serine and activated acyl-CoA (most commonly palmitoyl-CoA) to form long-chain bases. The SPT complex is composed of SPTLC1, SPTLC2 or SPTLC3 and SPTSSA or SPTSSB. Within this complex, the heterodimer consisting of SPTLC1 and SPTLC2/SPTLC3 forms the catalytic core. The composition of the serine palmitoyltransferase (SPT) complex determines the substrate preference. The SPTLC1-SPTLC2-SPTSSA complex shows a strong preference for C16-CoA substrate, while the SPTLC1-SPTLC3-SPTSSA isozyme uses both C14-CoA and C16-CoA as substrates, with a slight preference for C14-CoA. The SPTLC1-SPTLC2-SPTSSB complex shows a strong preference for C18-CoA substrate, while the SPTLC1-SPTLC3-SPTSSB isozyme displays an ability to use a broader range of acyl-CoAs, without apparent preference. Crucial for adipogenesis. The polypeptide is Serine palmitoyltransferase 2 (SPTLC2) (Cricetulus griseus (Chinese hamster)).